The sequence spans 143 residues: uncharacterized protein (143 aa).

The 129-residue stretch at 11–139 folds into the HTH marR-type domain; sequence EYELTTFIRR…FGELLQRMNK (129 aa). The H-T-H motif DNA-binding region spans 53–76; it reads VKELAESFKLDISTLSRQAAALEA.

This is an uncharacterized protein from Bacillus subtilis (strain 168).